We begin with the raw amino-acid sequence, 440 residues long: UDP-N-acetylmuramoylalanine--D-glutamate ligase (440 aa).

An ATP-binding site is contributed by 112–118; that stretch reads GSNGKST.

The protein belongs to the MurCDEF family.

The protein resides in the cytoplasm. The catalysed reaction is UDP-N-acetyl-alpha-D-muramoyl-L-alanine + D-glutamate + ATP = UDP-N-acetyl-alpha-D-muramoyl-L-alanyl-D-glutamate + ADP + phosphate + H(+). The protein operates within cell wall biogenesis; peptidoglycan biosynthesis. Functionally, cell wall formation. Catalyzes the addition of glutamate to the nucleotide precursor UDP-N-acetylmuramoyl-L-alanine (UMA). This Blochmanniella pennsylvanica (strain BPEN) protein is UDP-N-acetylmuramoylalanine--D-glutamate ligase.